The following is a 237-amino-acid chain: MRKTPLALSAVFLLLSLNQSAFAKEPAPAPLWPGVNVAQLAQQSPVHWVSVAQIENSLNGRPPIAVGFDIDDTVLFSSPGFYRGQVEFSPGKQDYLKNPKFWEKMNNGWDDFSMPKEVAKSLIAMHLKRGDSIYFVTGRSETKTETVTKTLQNDFQIPQDKVNAVIFAGDKAGQNTKTQWLKDKQIKVFYGDSDNDITAAQSVSARGIRVLRASNSSYKPLPQAGAFGEEVIVNSEY.

The first 23 residues, 1 to 23 (MRKTPLALSAVFLLLSLNQSAFA), serve as a signal peptide directing secretion. The active-site Nucleophile is aspartate 69. Aspartate 69 and aspartate 71 together coordinate Mg(2+). Aspartate 71 (proton donor) is an active-site residue. Substrate-binding positions include 137–138 (TG) and lysine 177. Aspartate 192 is a Mg(2+) binding site.

It belongs to the class B bacterial acid phosphatase family. Homotetramer. Requires Mg(2+) as cofactor.

Its subcellular location is the periplasm. It carries out the reaction a phosphate monoester + H2O = an alcohol + phosphate. Its function is as follows. Dephosphorylates several organic phosphate monoesters. Also has a phosphotransferase activity catalyzing the transfer of low-energy phosphate groups from organic phosphate monoesters to free hydroxyl groups of various organic compounds. The chain is Class B acid phosphatase from Rahnella sp. (strain Y9602).